The following is a 309-amino-acid chain: Large ribosomal subunit protein uL22m (309 aa).

Residues 1 to 25 (MNFHTARISQVGVISRALLSSVSRR) constitute a mitochondrion transit peptide. Residues 40-63 (SLFGSITENKPKEGKNRGDEDAGS) are disordered. A compositionally biased stretch (basic and acidic residues) spans 48-59 (NKPKEGKNRGDE).

The protein belongs to the universal ribosomal protein uL22 family. In terms of assembly, component of the mitochondrial large ribosomal subunit (mt-LSU). Mature yeast 74S mitochondrial ribosomes consist of a small (37S) and a large (54S) subunit. The 37S small subunit contains a 15S ribosomal RNA (15S mt-rRNA) and 34 different proteins. The 54S large subunit contains a 21S rRNA (21S mt-rRNA) and 46 different proteins. uL22m forms the wall of the exit tunnel.

It is found in the mitochondrion. Its function is as follows. Component of the mitochondrial ribosome (mitoribosome), a dedicated translation machinery responsible for the synthesis of mitochondrial genome-encoded proteins, including at least some of the essential transmembrane subunits of the mitochondrial respiratory chain. The mitoribosomes are attached to the mitochondrial inner membrane and translation products are cotranslationally integrated into the membrane. The polypeptide is Large ribosomal subunit protein uL22m (MRPL22) (Saccharomyces cerevisiae (strain ATCC 204508 / S288c) (Baker's yeast)).